The chain runs to 661 residues: Heme transporter BhuA (661 aa).

Residues 1 to 23 (MKFTRTLVLASTFLLATVATSQA) form the signal peptide. Positions 48 to 159 (KDNIEATGGT…AAGAIRYETV (112 aa)) constitute a TBDR plug domain. The region spanning 170 to 661 (TFGARIIGSY…TFTFQTAFKF (492 aa)) is the TBDR beta-barrel domain.

Belongs to the TonB-dependent receptor family.

It localises to the cell outer membrane. In terms of biological role, heme transporter. In Brucella suis biovar 1 (strain 1330), this protein is Heme transporter BhuA (bhuA).